The chain runs to 33 residues: MPRRRRSSSRPVRRRRRARVSRRRRRRGRRRRR.

Residues 1–33 (MPRRRRSSSRPVRRRRRARVSRRRRRRGRRRRR) are disordered.

In terms of tissue distribution, testis.

The protein localises to the nucleus. The protein resides in the chromosome. In terms of biological role, protamines substitute for histones in the chromatin of sperm during the haploid phase of spermatogenesis. They compact sperm DNA into a highly condensed, stable and inactive complex. In Oncorhynchus mykiss (Rainbow trout), this protein is Protamine TP16.